Here is a 260-residue protein sequence, read N- to C-terminus: Phosphatidate cytidylyltransferase (260 aa).

A run of 7 helical transmembrane segments spans residues 9–29 (IIALLIFLPILLKGGLILMLF), 46–66 (MIKFLSIPGLISALALIIIML), 70–90 (AGEWVQVIQLKGLIAMSFIVL), 102–122 (FMDAAFCLMSVAYVGIGFMYF), 130–150 (LRYILFAFLIVWLTDTGAYIF), 172–192 (FFGGILCSILVPLVMQMFVDL), and 196–216 (IWLLLLVTIVLSMFGQLGDLV).

The protein belongs to the CDS family.

The protein resides in the cell membrane. It carries out the reaction a 1,2-diacyl-sn-glycero-3-phosphate + CTP + H(+) = a CDP-1,2-diacyl-sn-glycerol + diphosphate. It functions in the pathway phospholipid metabolism; CDP-diacylglycerol biosynthesis; CDP-diacylglycerol from sn-glycerol 3-phosphate: step 3/3. The polypeptide is Phosphatidate cytidylyltransferase (cdsA) (Staphylococcus epidermidis (strain ATCC 35984 / DSM 28319 / BCRC 17069 / CCUG 31568 / BM 3577 / RP62A)).